We begin with the raw amino-acid sequence, 367 residues long: GTP cyclohydrolase FolE2 (367 aa).

It belongs to the GTP cyclohydrolase IV family.

It carries out the reaction GTP + H2O = 7,8-dihydroneopterin 3'-triphosphate + formate + H(+). The protein operates within cofactor biosynthesis; 7,8-dihydroneopterin triphosphate biosynthesis; 7,8-dihydroneopterin triphosphate from GTP: step 1/1. In terms of biological role, converts GTP to 7,8-dihydroneopterin triphosphate. The protein is GTP cyclohydrolase FolE2 of Dinoroseobacter shibae (strain DSM 16493 / NCIMB 14021 / DFL 12).